A 196-amino-acid chain; its full sequence is Orotate phosphoribosyltransferase (196 aa).

Residue 117 to 125 (EDVVTTGLS) participates in 5-phospho-alpha-D-ribose 1-diphosphate binding. Orotate is bound by residues threonine 121 and arginine 149.

The protein belongs to the purine/pyrimidine phosphoribosyltransferase family. PyrE subfamily. As to quaternary structure, homodimer. It depends on Mg(2+) as a cofactor.

It carries out the reaction orotidine 5'-phosphate + diphosphate = orotate + 5-phospho-alpha-D-ribose 1-diphosphate. It participates in pyrimidine metabolism; UMP biosynthesis via de novo pathway; UMP from orotate: step 1/2. In terms of biological role, catalyzes the transfer of a ribosyl phosphate group from 5-phosphoribose 1-diphosphate to orotate, leading to the formation of orotidine monophosphate (OMP). This is Orotate phosphoribosyltransferase from Rhizorhabdus wittichii (strain DSM 6014 / CCUG 31198 / JCM 15750 / NBRC 105917 / EY 4224 / RW1) (Sphingomonas wittichii).